The primary structure comprises 77 residues: Acyl carrier protein (77 aa).

The Carrier domain maps to methionine 1–glutamate 76. Serine 36 is subject to O-(pantetheine 4'-phosphoryl)serine.

This sequence belongs to the acyl carrier protein (ACP) family. In terms of processing, 4'-phosphopantetheine is transferred from CoA to a specific serine of apo-ACP by AcpS. This modification is essential for activity because fatty acids are bound in thioester linkage to the sulfhydryl of the prosthetic group.

The protein resides in the cytoplasm. The protein operates within lipid metabolism; fatty acid biosynthesis. Carrier of the growing fatty acid chain in fatty acid biosynthesis. The polypeptide is Acyl carrier protein (Staphylococcus saprophyticus subsp. saprophyticus (strain ATCC 15305 / DSM 20229 / NCIMB 8711 / NCTC 7292 / S-41)).